The chain runs to 292 residues: Zinc metalloproteinase nas-3 (292 aa).

Residues 1-16 (MYRFIIFFSLLALTAS) form the signal peptide. Residues 56–249 (RGIAIHPWQW…RNINTLYKCN (194 aa)) enclose the Peptidase M12A domain. 2 disulfides stabilise this stretch: Cys-103–Cys-248 and Cys-128–Cys-158. His-169 contacts Zn(2+). Glu-170 is an active-site residue. Positions 173 and 179 each coordinate Zn(2+).

The cofactor is Zn(2+).

The protein resides in the secreted. Metalloprotease. The sequence is that of Zinc metalloproteinase nas-3 (nas-3) from Caenorhabditis elegans.